Consider the following 515-residue polypeptide: 3-[(3aS,4S,7aS)-7a-methyl-1,5-dioxo-octahydro-1H-inden-4-yl]propanoyl:CoA ligase (515 aa).

Residues Thr-185 to Lys-193, Asp-398, Arg-413, and Lys-504 each bind ATP.

It belongs to the ATP-dependent AMP-binding enzyme family.

It carries out the reaction 3-[(3aS,4S,7aS)-7a-methyl-1,5-dioxo-octahydro-1H-inden-4-yl]propanoate + ATP + CoA = 3-[(3aS,4S,7aS)-7a-methyl-1,5-dioxo-octahydro-1H-inden-4-yl]propanoyl-CoA + AMP + diphosphate. In terms of biological role, involved in the catabolism of the rings C and D of cholesterol. Catalyzes the ATP-dependent CoA thioesterification of 3aalpha-H-4alpha(3'-propanoate)-7abeta-methylhexahydro-1,5-indanedione (HIP). This Rhodococcus jostii (strain RHA1) protein is 3-[(3aS,4S,7aS)-7a-methyl-1,5-dioxo-octahydro-1H-inden-4-yl]propanoyl:CoA ligase.